The sequence spans 262 residues: Glutamate racemase (262 aa).

Residues 7-8 (DS) and 39-40 (YG) each bind substrate. Cys-70 acts as the Proton donor/acceptor in catalysis. A substrate-binding site is contributed by 71-72 (NT). The Proton donor/acceptor role is filled by Cys-182. 183-184 (TH) is a binding site for substrate.

This sequence belongs to the aspartate/glutamate racemases family.

The catalysed reaction is L-glutamate = D-glutamate. It participates in cell wall biogenesis; peptidoglycan biosynthesis. Functionally, provides the (R)-glutamate required for cell wall biosynthesis. In Campylobacter concisus (strain 13826), this protein is Glutamate racemase.